Consider the following 85-residue polypeptide: Large ribosomal subunit protein bL27 (85 aa).

The disordered stretch occupies residues 1–22 (MAHKKAGGSTKNGRDSESKRLG).

This sequence belongs to the bacterial ribosomal protein bL27 family.

This Alteromonas mediterranea (strain DSM 17117 / CIP 110805 / LMG 28347 / Deep ecotype) protein is Large ribosomal subunit protein bL27.